We begin with the raw amino-acid sequence, 68 residues long: MAMTNEEKVLAIREKLNIVNQGLLDPEKYKNANEEQLTDIYDFVQSRERLSPSEVTAIADALGQLRHD.

It belongs to the UPF0435 family.

The sequence is that of UPF0435 protein SAB1812c from Staphylococcus aureus (strain bovine RF122 / ET3-1).